The sequence spans 361 residues: tRNA-specific 2-thiouridylase MnmA (361 aa).

ATP contacts are provided by residues 6 to 13 and Leu32; that span reads AMSGGVDS. Cys101 acts as the Nucleophile in catalysis. A disulfide bridge links Cys101 with Cys194. An ATP-binding site is contributed by Gly125. Positions 144–146 are interaction with tRNA; that stretch reads KDQ. The active-site Cysteine persulfide intermediate is the Cys194.

This sequence belongs to the MnmA/TRMU family.

The protein localises to the cytoplasm. It carries out the reaction S-sulfanyl-L-cysteinyl-[protein] + uridine(34) in tRNA + AH2 + ATP = 2-thiouridine(34) in tRNA + L-cysteinyl-[protein] + A + AMP + diphosphate + H(+). Catalyzes the 2-thiolation of uridine at the wobble position (U34) of tRNA, leading to the formation of s(2)U34. In Corynebacterium aurimucosum (strain ATCC 700975 / DSM 44827 / CIP 107346 / CN-1) (Corynebacterium nigricans), this protein is tRNA-specific 2-thiouridylase MnmA.